We begin with the raw amino-acid sequence, 358 residues long: Trans-anol O-methyltransferase 1 (358 aa).

S-adenosyl-L-methionine-binding residues include Gly-201, Asp-224, Asp-244, Met-245, and Arg-259. Catalysis depends on His-262, which acts as the Proton acceptor.

The protein belongs to the class I-like SAM-binding methyltransferase superfamily. Cation-independent O-methyltransferase family. COMT subfamily. As to expression, highly expressed in developing fruits. Expressed at low levels in roots, young leaves, buds and flowers.

It carries out the reaction (E)-anol + S-adenosyl-L-methionine = (E)-anethole + S-adenosyl-L-homocysteine + H(+). It catalyses the reaction (E)-isoeugenol + S-adenosyl-L-methionine = (E)-isomethyleugenol + S-adenosyl-L-homocysteine + H(+). Its pathway is aromatic compound metabolism; phenylpropanoid biosynthesis. Inhibited by zinc and copper. Functionally, phenylpropene O-methyltransferase that catalyzes the conversion of trans-anol to trans-anethole and isoeugenol to isomethyleugenol. Phenylpropenes are the primary constituents of various essential plant oils. They are produced as antimicrobial and antianimal compounds, or as floral attractants of pollinators. In Pimpinella anisum (Anise), this protein is Trans-anol O-methyltransferase 1 (AIMT1).